A 378-amino-acid polypeptide reads, in one-letter code: Ribosomal RNA large subunit methyltransferase G (378 aa).

It belongs to the methyltransferase superfamily. RlmG family.

It is found in the cytoplasm. It carries out the reaction guanosine(1835) in 23S rRNA + S-adenosyl-L-methionine = N(2)-methylguanosine(1835) in 23S rRNA + S-adenosyl-L-homocysteine + H(+). Specifically methylates the guanine in position 1835 (m2G1835) of 23S rRNA. The sequence is that of Ribosomal RNA large subunit methyltransferase G from Shewanella putrefaciens (strain CN-32 / ATCC BAA-453).